Consider the following 170-residue polypeptide: NADH-quinone oxidoreductase subunit B (170 aa).

4 residues coordinate [4Fe-4S] cluster: cysteine 37, cysteine 38, cysteine 102, and cysteine 131.

It belongs to the complex I 20 kDa subunit family. In terms of assembly, NDH-1 is composed of 14 different subunits. Subunits NuoB, C, D, E, F, and G constitute the peripheral sector of the complex. The cofactor is [4Fe-4S] cluster.

It localises to the cell inner membrane. It carries out the reaction a quinone + NADH + 5 H(+)(in) = a quinol + NAD(+) + 4 H(+)(out). Functionally, NDH-1 shuttles electrons from NADH, via FMN and iron-sulfur (Fe-S) centers, to quinones in the respiratory chain. The immediate electron acceptor for the enzyme in this species is believed to be ubiquinone. Couples the redox reaction to proton translocation (for every two electrons transferred, four hydrogen ions are translocated across the cytoplasmic membrane), and thus conserves the redox energy in a proton gradient. This Geotalea daltonii (strain DSM 22248 / JCM 15807 / FRC-32) (Geobacter daltonii) protein is NADH-quinone oxidoreductase subunit B.